Reading from the N-terminus, the 213-residue chain is Histone H1.2 (213 aa).

Low complexity predominate over residues 1-17; the sequence is MSETAPAAPAAAPPAEK. The tract at residues 1-41 is disordered; that stretch reads MSETAPAAPAAAPPAEKAPVKKKAAKKAGGTPRKASGPPVS. Residue serine 2 is modified to N-acetylserine; partial. At serine 2 the chain carries Phosphoserine. Lysine 17 carries the N6-acetyllysine modification. 3 positions are modified to N6-(2-hydroxyisobutyryl)lysine: lysine 23, lysine 26, and lysine 27. At lysine 34 the chain carries N6-(beta-hydroxybutyryl)lysine; alternate. N6-crotonyllysine; alternate is present on lysine 34. Position 34 is an N6-methyllysine; alternate (lysine 34). An H15 domain is found at 36-109; it reads SGPPVSELIT…GASGSFKLNK (74 aa). Lysine 46 carries the post-translational modification N6-(2-hydroxyisobutyryl)lysine. Lysine 52 is subject to N6-(beta-hydroxybutyryl)lysine; alternate. Lysine 52 is subject to N6-(2-hydroxyisobutyryl)lysine; alternate. At arginine 54 the chain carries Citrulline. The residue at position 63 (lysine 63) is an N6-(2-hydroxyisobutyryl)lysine. Residue lysine 64 is modified to N6-(beta-hydroxybutyryl)lysine; alternate. Position 64 is an N6-crotonyllysine; alternate (lysine 64). Position 64 is an N6-(2-hydroxyisobutyryl)lysine; alternate (lysine 64). N6-(2-hydroxyisobutyryl)lysine occurs at positions 75 and 81. Lysine 85 and lysine 90 each carry N6-(beta-hydroxybutyryl)lysine; alternate. N6-crotonyllysine; alternate occurs at positions 85, 90, and 97. Residues lysine 85, lysine 90, and lysine 97 each carry the N6-(2-hydroxyisobutyryl)lysine; alternate modification. The interval 92–213 is disordered; it reads TLVQTKGTGA…KPKKAAPKKK (122 aa). Lysine 97 bears the N6-succinyllysine; alternate mark. Residue serine 104 is modified to Phosphoserine; by PKC. Lysine 106 carries the post-translational modification N6-(beta-hydroxybutyryl)lysine. An N6-(2-hydroxyisobutyryl)lysine mark is found at lysine 110, lysine 117, lysine 121, lysine 129, and lysine 136. Positions 119–140 are enriched in basic residues; sequence KVKKAGGTKPKKPVGAAKKPKK. Phosphothreonine is present on threonine 146. Lysine 148 is modified (N6-(2-hydroxyisobutyryl)lysine). The segment covering 149 to 160 has biased composition (basic residues); sequence KSAKKTPKKAKK. An N6-crotonyllysine; alternate mark is found at lysine 159 and lysine 168. Lysine 159 and lysine 168 each carry N6-(2-hydroxyisobutyryl)lysine; alternate. Residues 169 to 186 show a composition bias toward basic residues; that stretch reads KVAKSPKKAKVAKPKKAA. Lysine 187 bears the N6-methyllysine; by EHMT1 and EHMT2 mark. Residue serine 188 is modified to ADP-ribosylserine. A compositionally biased stretch (basic residues) spans 193–213; it reads VKPKAAKPKVVKPKKAAPKKK. Position 213 is an N6-(2-hydroxyisobutyryl)lysine (lysine 213).

It belongs to the histone H1/H5 family. In terms of assembly, interacts with TSC22D1 isoforms 2 and 5. In terms of processing, H1 histones are progressively phosphorylated during the cell cycle, becoming maximally phosphorylated during late G2 phase and M phase, and being dephosphorylated sharply thereafter. Crotonylation (Kcr) is specifically present in male germ cells and marks testis-specific genes in post-meiotic cells, including X-linked genes that escape sex chromosome inactivation in haploid cells. Crotonylation marks active promoters and enhancers and confers resistance to transcriptional repressors. It is also associated with post-meiotically activated genes on autosomes. Post-translationally, citrullination at Arg-54 (H1R54ci) by PADI4 takes place within the DNA-binding site of H1 and results in its displacement from chromatin and global chromatin decondensation, thereby promoting pluripotency and stem cell maintenance. In terms of processing, ADP-ribosylated on Ser-188 in response to DNA damage.

The protein resides in the nucleus. The protein localises to the chromosome. Functionally, histone H1 protein binds to linker DNA between nucleosomes forming the macromolecular structure known as the chromatin fiber. Histones H1 are necessary for the condensation of nucleosome chains into higher-order structured fibers. Also acts as a regulator of individual gene transcription through chromatin remodeling, nucleosome spacing and DNA methylation. The chain is Histone H1.2 from Homo sapiens (Human).